A 276-amino-acid polypeptide reads, in one-letter code: Thiazole synthase (276 aa).

Residue Lys-112 is the Schiff-base intermediate with DXP of the active site. Residues Gly-173, 199–200, and 221–222 contribute to the 1-deoxy-D-xylulose 5-phosphate site; these read AG and NT.

The protein belongs to the ThiG family. In terms of assembly, homotetramer. Forms heterodimers with either ThiH or ThiS.

It localises to the cytoplasm. The catalysed reaction is [ThiS sulfur-carrier protein]-C-terminal-Gly-aminoethanethioate + 2-iminoacetate + 1-deoxy-D-xylulose 5-phosphate = [ThiS sulfur-carrier protein]-C-terminal Gly-Gly + 2-[(2R,5Z)-2-carboxy-4-methylthiazol-5(2H)-ylidene]ethyl phosphate + 2 H2O + H(+). It participates in cofactor biosynthesis; thiamine diphosphate biosynthesis. In terms of biological role, catalyzes the rearrangement of 1-deoxy-D-xylulose 5-phosphate (DXP) to produce the thiazole phosphate moiety of thiamine. Sulfur is provided by the thiocarboxylate moiety of the carrier protein ThiS. In vitro, sulfur can be provided by H(2)S. The sequence is that of Thiazole synthase from Synechococcus sp. (strain ATCC 27144 / PCC 6301 / SAUG 1402/1) (Anacystis nidulans).